We begin with the raw amino-acid sequence, 1040 residues long: FHF complex subunit HOOK-interacting protein 1A (1040 aa).

Disordered regions lie at residues 555–613 (PQQL…PIDP), 653–746 (SEDM…AAHP), and 769–808 (LMEQ…EDEE). The span at 653–664 (SEDMKDSQEEAA) shows a compositional bias: basic and acidic residues. Over residues 677–690 (VPINNGPLLSTQPE) the composition is skewed to polar residues. Basic and acidic residues-rich tracts occupy residues 696 to 719 (EWNR…REPE) and 783 to 804 (TKEE…KKEL).

It belongs to the FHIP family. As to quaternary structure, may be a component of the FTS/Hook/FHIP complex (FHF complex), composed of AKTIP/FTS, FHIP1B, and one or more members of the Hook family of proteins HOOK1, HOOK2, and HOOK3. May interact directly with AKTIP/FTS.

Probable component of the FTS/Hook/FHIP complex (FHF complex). FHF complex promotes the distribution of AP-4 complex to the perinuclear area of the cell. The polypeptide is FHF complex subunit HOOK-interacting protein 1A (Homo sapiens (Human)).